A 377-amino-acid chain; its full sequence is MISPRMTTNLLPARTISLVSNGGAATASPSSPSVAARPRRPSSGTGRGKVSAITLDDYLPMRSTEVKNRTSTDDITSLRLITAVKTPYLPDGRFDLEAYDSLINMQIEGGAEGVIVGGTTGEGHLMSWDEHIMLIGHTVNCFGSRIKVIGNTGSNSTREAVHATEQGFAVGMHAALHINPYYGKTSTEGMISHFESVLPMGPTIIYNVPSRSAQDIPPEVIVAISGYINMAGVKECIGHERIKHYADKGITIWSGNDDECHDSRWKYGATGVISVTSNLVPGLMHSLMYKGENAVLKEKLLPLMKWLFCQPNPIALNTALAQLGVARPVFRLPYVPLPLEKRAEFVRIVEAIGRENFVGQKETRVLDDDDFVLISRY.

Residues 1-51 constitute a chloroplast transit peptide; the sequence is MISPRMTTNLLPARTISLVSNGGAATASPSSPSVAARPRRPSSGTGRGKVS. The tract at residues 21–50 is disordered; sequence NGGAATASPSSPSVAARPRRPSSGTGRGKV. The segment covering 24-44 has biased composition (low complexity); sequence AATASPSSPSVAARPRRPSSG. T120 is a binding site for pyruvate. Y206 functions as the Proton donor/acceptor in the catalytic mechanism. Residue K234 is the Schiff-base intermediate with substrate of the active site. A pyruvate-binding site is contributed by I273.

The protein belongs to the DapA family.

The protein localises to the plastid. It localises to the chloroplast. The enzyme catalyses L-aspartate 4-semialdehyde + pyruvate = (2S,4S)-4-hydroxy-2,3,4,5-tetrahydrodipicolinate + H2O + H(+). It participates in amino-acid biosynthesis; L-lysine biosynthesis via DAP pathway; (S)-tetrahydrodipicolinate from L-aspartate: step 3/4. Its function is as follows. Catalyzes the condensation of (S)-aspartate-beta-semialdehyde [(S)-ASA] and pyruvate to 4-hydroxy-tetrahydrodipicolinate (HTPA). The polypeptide is 4-hydroxy-tetrahydrodipicolinate synthase, chloroplastic (DAPA) (Coix lacryma-jobi (Job's tears)).